The following is a 583-amino-acid chain: Phosphoglucomutase, cytoplasmic 2 (583 aa).

Residues R25 and S124 each contribute to the alpha-D-glucose 1,6-bisphosphate site. The Phosphoserine intermediate role is filled by S124. The Mg(2+) site is built by S124, D300, D302, and D304. S124 is subject to Phosphoserine. Alpha-D-glucose 1,6-bisphosphate contacts are provided by D304, R305, T368, E387, S389, and K400.

The protein belongs to the phosphohexose mutase family. Monomer. Mg(2+) is required as a cofactor.

The protein resides in the cytoplasm. The catalysed reaction is alpha-D-glucose 1-phosphate = alpha-D-glucose 6-phosphate. It carries out the reaction O-phospho-L-seryl-[protein] + alpha-D-glucose 1-phosphate = alpha-D-glucose 1,6-bisphosphate + L-seryl-[protein]. It catalyses the reaction alpha-D-glucose 1,6-bisphosphate + L-seryl-[protein] = O-phospho-L-seryl-[protein] + alpha-D-glucose 6-phosphate. Its function is as follows. Catalyzes the reversible isomerization of alpha-D-glucose 1-phosphate to alpha-D-glucose 6-phosphate. The mechanism proceeds via the intermediate compound alpha-D-glucose 1,6-bisphosphate. This enzyme participates in both the breakdown and synthesis of glucose. The sequence is that of Phosphoglucomutase, cytoplasmic 2 from Zea mays (Maize).